Reading from the N-terminus, the 234-residue chain is Phosphoglycolate phosphatase (234 aa).

The Nucleophile role is filled by Asp9. Positions 9 and 11 each coordinate Mg(2+). Position 162 (Lys162) interacts with substrate. Residues Asp185 and Asp189 each contribute to the Mg(2+) site.

It belongs to the archaeal SPP-like hydrolase family. Mg(2+) serves as cofactor.

The catalysed reaction is 2-phosphoglycolate + H2O = glycolate + phosphate. Its function is as follows. Catalyzes the dephosphorylation of 2-phosphoglycolate. The polypeptide is Phosphoglycolate phosphatase (Methanobrevibacter smithii (strain ATCC 35061 / DSM 861 / OCM 144 / PS)).